Consider the following 428-residue polypeptide: Serine--tRNA ligase (428 aa).

235–237 is an L-serine binding site; that stretch reads TAE. Position 266–268 (266–268) interacts with ATP; that stretch reads RSE. Residue glutamate 289 participates in L-serine binding. 353–356 lines the ATP pocket; it reads EISS. Serine 389 contacts L-serine.

This sequence belongs to the class-II aminoacyl-tRNA synthetase family. Type-1 seryl-tRNA synthetase subfamily. As to quaternary structure, homodimer. The tRNA molecule binds across the dimer.

It localises to the cytoplasm. The catalysed reaction is tRNA(Ser) + L-serine + ATP = L-seryl-tRNA(Ser) + AMP + diphosphate + H(+). It carries out the reaction tRNA(Sec) + L-serine + ATP = L-seryl-tRNA(Sec) + AMP + diphosphate + H(+). It functions in the pathway aminoacyl-tRNA biosynthesis; selenocysteinyl-tRNA(Sec) biosynthesis; L-seryl-tRNA(Sec) from L-serine and tRNA(Sec): step 1/1. Its function is as follows. Catalyzes the attachment of serine to tRNA(Ser). Is also able to aminoacylate tRNA(Sec) with serine, to form the misacylated tRNA L-seryl-tRNA(Sec), which will be further converted into selenocysteinyl-tRNA(Sec). This Shewanella oneidensis (strain ATCC 700550 / JCM 31522 / CIP 106686 / LMG 19005 / NCIMB 14063 / MR-1) protein is Serine--tRNA ligase.